Reading from the N-terminus, the 441-residue chain is Nucleoprotein (441 aa).

The segment at 1-56 is disordered; sequence MSYTPGHHAGSRSSSGNRSGILKKTSWVDQSERSHQTYNRGRKPQPKFTVSTQPQG. Over residues 11–20 the composition is skewed to low complexity; that stretch reads SRSSSGNRSG. The segment at 53–193 is RNA-binding; it reads QPQGNPIPHY…GYYVEGSGRS (141 aa). In terms of domain architecture, CoV N NTD spans 60–189; sequence PHYSWFSGIT…ILPQGYYVEG (130 aa). RNA-binding residues include Arg-105 and Arg-121. Ser-158 bears the Phosphoserine; by host mark. Residue Arg-163 coordinates RNA. Thr-173 is modified (phosphothreonine; by host). A disordered region spans residues 186 to 226; sequence YVEGSGRSASNSRPGSRSQSRGPNNRSLSRSNSNFRHSDSI. The span at 189 to 220 shows a compositional bias: low complexity; that stretch reads GSGRSASNSRPGSRSQSRGPNNRSLSRSNSNF. A Phosphoserine; by host modification is found at Ser-190. Positions 257–379 constitute a CoV N CTD domain; the sequence is AKEIRHKILM…ENLDAYVNSN (123 aa). The segment at 264-382 is dimerization; that stretch reads ILMKPRQKRT…DAYVNSNQNT (119 aa). Residues 380 to 389 show a composition bias toward polar residues; it reads QNTVSGSLSP. Residues 380 to 408 are disordered; that stretch reads QNTVSGSLSPKPQRKRGVKQSPESFDSLN. Phosphoserine; by host is present on residues Ser-388 and Ser-417. The residue at position 421 (Thr-421) is a Phosphothreonine; by host.

This sequence belongs to the betacoronavirus nucleocapsid protein family. As to quaternary structure, homooligomer. Both monomeric and oligomeric forms interact with RNA. Interacts with protein M. Interacts with NSP3; this interaction serves to tether the genome to the newly translated replicase-transcriptase complex at a very early stage of infection. ADP-ribosylated. The ADP-ribosylation is retained in the virion during infection. Post-translationally, phosphorylated on serine and threonine residues.

Its subcellular location is the virion. It localises to the host endoplasmic reticulum-Golgi intermediate compartment. The protein localises to the host Golgi apparatus. In terms of biological role, packages the positive strand viral genome RNA into a helical ribonucleocapsid (RNP) and plays a fundamental role during virion assembly through its interactions with the viral genome and membrane protein M. Plays an important role in enhancing the efficiency of subgenomic viral RNA transcription as well as viral replication. The protein is Nucleoprotein of Homo sapiens (Human).